Here is a 492-residue protein sequence, read N- to C-terminus: PHO85 cyclin-8 (492 aa).

Disordered stretches follow at residues 1-32 (MAND…DNDS), 143-163 (SGSG…GTGR), and 223-252 (KVNS…ENES). Positions 8–20 (NKSLINDALTRSM) are enriched in polar residues. The span at 23-32 (FYDDDDDNDS) shows a compositional bias: acidic residues. Residue Ser-32 is modified to Phosphoserine.

It belongs to the cyclin family. PHO80 subfamily. Forms a cyclin-CDK complex with PHO85.

It is found in the cytoplasm. The protein localises to the nucleus. In terms of biological role, cyclin partner of the cyclin-dependent kinase (CDK) PHO85. Together with cyclin PCL10, negatively controls glycogen accumulation under favorable growth conditions. Involved in phosphorylation and negative regulation of glycogen synthase GSY2. Also has minor GLC8 kinase activity. The protein is PHO85 cyclin-8 (PCL8) of Saccharomyces cerevisiae (strain ATCC 204508 / S288c) (Baker's yeast).